Reading from the N-terminus, the 476-residue chain is Lactate utilization protein B (476 aa).

4Fe-4S ferredoxin-type domains are found at residues 304 to 334 (GTEFQPVLQCIRCAACVNVCPVYRHIGGHSY) and 353 to 382 (YDDYKELPYASSLCAACTEVCPVKIPLHEL). Cys313, Cys316, Cys319, Cys323, Cys366, Cys369, and Cys373 together coordinate [4Fe-4S] cluster.

Belongs to the LutB/YkgF family.

In terms of biological role, is involved in L-lactate degradation and allows cells to grow with lactate as the sole carbon source. Has probably a role as an electron transporter during oxidation of L-lactate. The polypeptide is Lactate utilization protein B (Geobacillus thermodenitrificans (strain NG80-2)).